Reading from the N-terminus, the 409-residue chain is N-acetylglucosamine-6-phosphate deacetylase (409 aa).

An a divalent metal cation-binding site is contributed by Glu143. 154 to 155 (AH) contributes to the substrate binding site. The a divalent metal cation site is built by His211 and His232. Substrate contacts are provided by residues 235 to 236 (NA), Arg243, and 269 to 272 (DGIH). Asp294 acts as the Proton donor/acceptor in catalysis. Residue 328–330 (LSG) coordinates substrate.

The protein belongs to the metallo-dependent hydrolases superfamily. NagA family. It depends on a divalent metal cation as a cofactor.

The catalysed reaction is N-acetyl-D-glucosamine 6-phosphate + H2O = D-glucosamine 6-phosphate + acetate. It functions in the pathway amino-sugar metabolism; N-acetylneuraminate degradation. Functionally, hydrolyzes the N-glycolyl group from N-glycolylglucosamine 6-phosphate (GlcNGc-6-P) in the N-glycolylneuraminic acid (Neu5Gc) degradation pathway. The chain is N-acetylglucosamine-6-phosphate deacetylase (AMDHD2) from Bos taurus (Bovine).